A 138-amino-acid chain; its full sequence is Gonadotropin subunit beta-2 (138 aa).

An N-terminal signal peptide occupies residues 1–21 (MPASSYFLLFFFMNFFSPAQS). Disulfide bonds link C27-C75, C41-C90, C44-C128, C52-C106, C56-C108, and C111-C118. N-linked (GlcNAc...) asparagine glycosylation occurs at N31.

It belongs to the glycoprotein hormones subunit beta family. As to quaternary structure, heterodimer of an alpha and a beta chain.

The protein localises to the secreted. Its function is as follows. Involved in gametogenesis and steroidogenesis. The chain is Gonadotropin subunit beta-2 (cgbb) from Clarias gariepinus (North African catfish).